A 115-amino-acid polypeptide reads, in one-letter code: Anamorsin homolog 2 (115 aa).

The segment at V30 to I115 is disordered. The [2Fe-2S] cluster site is built by C39, C46, C49, and C51. The fe-S binding site A stretch occupies residues C39–C51. The [4Fe-4S] cluster site is built by C77, C80, C88, and C91. Short sequence motifs (cx2C motif) lie at residues C77–C80 and C88–C91. Residues C77–C91 are fe-S binding site B.

The protein belongs to the anamorsin family. Monomer. [2Fe-2S] cluster serves as cofactor. [4Fe-4S] cluster is required as a cofactor.

It localises to the cytoplasm. The protein localises to the mitochondrion intermembrane space. Its function is as follows. Component of the cytosolic iron-sulfur (Fe-S) protein assembly (CIA) machinery. Required for the maturation of extramitochondrial Fe-S proteins. Part of an electron transfer chain functioning in an early step of cytosolic Fe-S biogenesis, facilitating the de novo assembly of a [4Fe-4S] cluster on the cytosolic Fe-S scaffold complex. Electrons are transferred from NADPH via a FAD- and FMN-containing diflavin oxidoreductase. Together with the diflavin oxidoreductase, also required for the assembly of the diferric tyrosyl radical cofactor of ribonucleotide reductase (RNR), probably by providing electrons for reduction during radical cofactor maturation in the catalytic small subunit. The polypeptide is Anamorsin homolog 2 (Trypanosoma cruzi (strain CL Brener)).